The primary structure comprises 841 residues: Protein translocase subunit SecA (841 aa).

ATP contacts are provided by residues Gln87, 105–109 (GEGKT), and Asp494. Residues Cys825, Cys827, Cys836, and Cys837 each coordinate Zn(2+).

It belongs to the SecA family. As to quaternary structure, monomer and homodimer. Part of the essential Sec protein translocation apparatus which comprises SecA, SecYEG and auxiliary proteins SecDF-YajC and YidC. Zn(2+) is required as a cofactor.

The protein resides in the cell inner membrane. It is found in the cytoplasm. It catalyses the reaction ATP + H2O + cellular proteinSide 1 = ADP + phosphate + cellular proteinSide 2.. Functionally, part of the Sec protein translocase complex. Interacts with the SecYEG preprotein conducting channel. Has a central role in coupling the hydrolysis of ATP to the transfer of proteins into and across the cell membrane, serving as an ATP-driven molecular motor driving the stepwise translocation of polypeptide chains across the membrane. The sequence is that of Protein translocase subunit SecA from Syntrophus aciditrophicus (strain SB).